The sequence spans 438 residues: Gamma-glutamyl phosphate reductase (438 aa).

The interval methionine 1 to glutamate 21 is disordered. Basic and acidic residues predominate over residues threonine 10–glutamate 21.

Belongs to the gamma-glutamyl phosphate reductase family.

The protein localises to the cytoplasm. The enzyme catalyses L-glutamate 5-semialdehyde + phosphate + NADP(+) = L-glutamyl 5-phosphate + NADPH + H(+). It participates in amino-acid biosynthesis; L-proline biosynthesis; L-glutamate 5-semialdehyde from L-glutamate: step 2/2. Catalyzes the NADPH-dependent reduction of L-glutamate 5-phosphate into L-glutamate 5-semialdehyde and phosphate. The product spontaneously undergoes cyclization to form 1-pyrroline-5-carboxylate. This Corynebacterium efficiens (strain DSM 44549 / YS-314 / AJ 12310 / JCM 11189 / NBRC 100395) protein is Gamma-glutamyl phosphate reductase.